The chain runs to 403 residues: GDSL esterase/lipase At1g28590 (403 aa).

The N-terminal stretch at 1 to 27 (MASLDSLPAMKLVRFILSTLLVTSVNS) is a signal peptide. Residue S43 is the Nucleophile of the active site. Residues N139 and N323 are each glycosylated (N-linked (GlcNAc...) asparagine). Residues D346 and H349 contribute to the active site.

The protein belongs to the 'GDSL' lipolytic enzyme family.

The protein localises to the secreted. This Arabidopsis thaliana (Mouse-ear cress) protein is GDSL esterase/lipase At1g28590.